The chain runs to 223 residues: MVLKHSVTYNLSFFISFTFSSIFFSSLILFLVYKSVLSKLFFIKYLMLNLTKVGLRRFWSQSPRRNAPKKELSSLLESTITPKAFSKRTEEPNPIMQGTDTIPMPFYLHAKCLKNNTHITLCSPERKIIFRASGGTCGFRKGKRRGYDAAYTICSKVLEQIQVKRLGIENLHVIFHGFSQAREAVQNCLLGQEGAVIRDKIVKVMDRTPIKFGGPRGRRERRI.

The transit peptide at 1 to 38 (MVLKHSVTYNLSFFISFTFSSIFFSSLILFLVYKSVLS) directs the protein to the mitochondrion.

This sequence belongs to the universal ribosomal protein uS11 family. Component of the mitochondrial small ribosomal subunit (mt-SSU). Mature yeast 74S mitochondrial ribosomes consist of a small (37S) and a large (54S) subunit. The 37S small subunit contains a 15S ribosomal RNA (15S mt-rRNA) and at least 32 different proteins. The 54S large subunit contains a 21S rRNA (21S mt-rRNA) and at least 45 different proteins.

It is found in the mitochondrion. In terms of biological role, component of the mitochondrial ribosome (mitoribosome), a dedicated translation machinery responsible for the synthesis of mitochondrial genome-encoded proteins, including at least some of the essential transmembrane subunits of the mitochondrial respiratory chain. The mitoribosomes are attached to the mitochondrial inner membrane and translation products are cotranslationally integrated into the membrane. This chain is Small ribosomal subunit protein uS11m (mrps18), found in Schizosaccharomyces pombe (strain 972 / ATCC 24843) (Fission yeast).